The following is a 202-amino-acid chain: Superoxide dismutase [Mn] (202 aa).

Histidine 27 contacts Mn(2+). Phosphothreonine occurs at positions 34 and 70. Positions 82, 164, and 168 each coordinate Mn(2+).

The protein belongs to the iron/manganese superoxide dismutase family. As to quaternary structure, homodimer. Mn(2+) serves as cofactor.

The enzyme catalyses 2 superoxide + 2 H(+) = H2O2 + O2. Destroys superoxide anion radicals which are normally produced within the cells and which are toxic to biological systems. This chain is Superoxide dismutase [Mn] (sodA), found in Halalkalibacterium halodurans (strain ATCC BAA-125 / DSM 18197 / FERM 7344 / JCM 9153 / C-125) (Bacillus halodurans).